A 489-amino-acid polypeptide reads, in one-letter code: Cytochrome P450 monooxygenase ataF (489 aa).

The helical transmembrane segment at 12–32 threads the bilayer; the sequence is WLEHSAVIATLFAFGTALFLV. Residue Asn-289 is glycosylated (N-linked (GlcNAc...) asparagine). Cys-434 contributes to the heme binding site.

It belongs to the cytochrome P450 family. Heme serves as cofactor.

The protein localises to the membrane. It functions in the pathway mycotoxin biosynthesis. Functionally, cytochrome P450 monooxygenase; part of the gene cluster that mediates the biosynthesis of acetylaranotin, a member of the epipolythiodioxopiperazine (ETP) class of toxins characterized by a disulfide-bridged cyclic dipeptide. The first step of acetylaranotin biosynthesis is performed by the NRPS ataP which produces diketopiperazine cyclo-L-Phe-L-Phe via the condensation of 2 phenylalanines (L-Phe). The ataC domain of ataTC then catalyzes the formation of bishydroxylation of cyclo-L-Phe-L-Phe. The glutathione S-transferase domain ataG in ataIMG further catalyzes the conjugation of two glutathiones to the bishydroxylated intermediate. Next, the dipeptidase ataJ removes the Glu residues. The following step is performed by the carbon sulfur lyase domain ataI of ataIMG which may convert the bis-cysteinyl adduct to yield an epidithiol intermediate. The ataT domain from ataTC then catalyzes the oxidation of the free dithiols, followed by a cyclization step catalyzed by the cytochrome P450 ataF. AtaF probably acts as an epoxidase to promote a dual epoxidation formation at C8 and C9 along with C8' and C9', followed by the spontaneous nucleophilic attack of the amide nitrogens N10 and N10' to yield an intermediate with the pyrrolidine partial structure. The final steps of acetylaranotin biosynthesis involve the acetylation and ring rearrangement of an epitetrathiodiketopiperazine intermediate to produce acetylaranotin. AtaH probably catalyzes the acetylation of epitetrathiodiketopiperazine to produce a diacetate and ataY is responsible for the formation of the dihydrooxepin moiety that converts the diacetate intermediate to acetylaranotin via acetylapoaranotin. Both enzymes could function independently in the absence of the other. The acetylaranotin bis-thiomethyltransferase ataS located outside of acetylaranotin gene cluster is the main thiomethyltransferase responsible for converting acetylaranotin and its related intermediates to their methylated forms. This Aspergillus terreus (strain NIH 2624 / FGSC A1156) protein is Cytochrome P450 monooxygenase ataF.